The sequence spans 182 residues: Large ribosomal subunit protein uL10 (182 aa).

Belongs to the universal ribosomal protein uL10 family. As to quaternary structure, part of the ribosomal stalk of the 50S ribosomal subunit. The N-terminus interacts with L11 and the large rRNA to form the base of the stalk. The C-terminus forms an elongated spine to which L12 dimers bind in a sequential fashion forming a multimeric L10(L12)X complex.

Its function is as follows. Forms part of the ribosomal stalk, playing a central role in the interaction of the ribosome with GTP-bound translation factors. This is Large ribosomal subunit protein uL10 from Gluconacetobacter diazotrophicus (strain ATCC 49037 / DSM 5601 / CCUG 37298 / CIP 103539 / LMG 7603 / PAl5).